We begin with the raw amino-acid sequence, 214 residues long: Pyridoxine/pyridoxamine 5'-phosphate oxidase (214 aa).

Residues 9 to 12 and Lys67 each bind substrate; that span reads RKDY. FMN-binding positions include 62–67, 77–78, Arg83, Lys84, and Gln106; these read RMVLLK and FT. The substrate site is built by Tyr124, Arg128, and Ser132. FMN contacts are provided by residues 141–142 and Trp186; that span reads QS. 192-194 contributes to the substrate binding site; that stretch reads RLH. Arg196 serves as a coordination point for FMN.

Belongs to the pyridoxamine 5'-phosphate oxidase family. Homodimer. It depends on FMN as a cofactor.

The catalysed reaction is pyridoxamine 5'-phosphate + O2 + H2O = pyridoxal 5'-phosphate + H2O2 + NH4(+). It carries out the reaction pyridoxine 5'-phosphate + O2 = pyridoxal 5'-phosphate + H2O2. Its pathway is cofactor metabolism; pyridoxal 5'-phosphate salvage; pyridoxal 5'-phosphate from pyridoxamine 5'-phosphate: step 1/1. The protein operates within cofactor metabolism; pyridoxal 5'-phosphate salvage; pyridoxal 5'-phosphate from pyridoxine 5'-phosphate: step 1/1. In terms of biological role, catalyzes the oxidation of either pyridoxine 5'-phosphate (PNP) or pyridoxamine 5'-phosphate (PMP) into pyridoxal 5'-phosphate (PLP). The sequence is that of Pyridoxine/pyridoxamine 5'-phosphate oxidase from Nostoc sp. (strain PCC 7120 / SAG 25.82 / UTEX 2576).